The chain runs to 766 residues: Subtilisin-like protease SBT4.15 (766 aa).

The signal sequence occupies residues methionine 1–alanine 23. Positions alanine 24–histidine 113 are cleaved as a propeptide — activation peptide. The 79-residue stretch at tyrosine 35 to histidine 113 folds into the Inhibitor I9 domain. Residues serine 117 to isoleucine 601 form the Peptidase S8 domain. Aspartate 144 functions as the Charge relay system in the catalytic mechanism. Residue asparagine 175 is glycosylated (N-linked (GlcNAc...) asparagine). Histidine 210 acts as the Charge relay system in catalysis. N-linked (GlcNAc...) asparagine glycosylation is found at asparagine 233, asparagine 376, and asparagine 465. In terms of domain architecture, PA spans methionine 365–isoleucine 460. Serine 543 functions as the Charge relay system in the catalytic mechanism. Asparagine 624, asparagine 638, and asparagine 668 each carry an N-linked (GlcNAc...) asparagine glycan.

It belongs to the peptidase S8 family. In terms of processing, the C-terminal propeptide is autocleaved.

It localises to the secreted. The polypeptide is Subtilisin-like protease SBT4.15 (Arabidopsis thaliana (Mouse-ear cress)).